A 231-amino-acid polypeptide reads, in one-letter code: ATP-dependent dethiobiotin synthetase BioD 2 (231 aa).

13–18 (SVGKTV) is a binding site for ATP. Thr17 is a binding site for Mg(2+). Lys38 is an active-site residue. Residues Asp55, 112 to 115 (EGTG), 172 to 173 (NR), 201 to 203 (PYL), and Gln208 contribute to the ATP site. Mg(2+)-binding residues include Asp55 and Glu112.

This sequence belongs to the dethiobiotin synthetase family. In terms of assembly, homodimer. The cofactor is Mg(2+).

The protein resides in the cytoplasm. It carries out the reaction (7R,8S)-7,8-diammoniononanoate + CO2 + ATP = (4R,5S)-dethiobiotin + ADP + phosphate + 3 H(+). It functions in the pathway cofactor biosynthesis; biotin biosynthesis; biotin from 7,8-diaminononanoate: step 1/2. In terms of biological role, catalyzes a mechanistically unusual reaction, the ATP-dependent insertion of CO2 between the N7 and N8 nitrogen atoms of 7,8-diaminopelargonic acid (DAPA, also called 7,8-diammoniononanoate) to form a ureido ring. The sequence is that of ATP-dependent dethiobiotin synthetase BioD 2 from Escherichia coli O157:H7.